The chain runs to 314 residues: DNA-directed RNA polymerase subunit alpha (314 aa).

The tract at residues 1 to 228 is alpha N-terminal domain (alpha-NTD); that stretch reads MIEIEKPVIE…EHLNIFVGLT (228 aa). The alpha C-terminal domain (alpha-CTD) stretch occupies residues 245–314; that stretch reads KEKVLEMTIE…ELGLGLRKEE (70 aa).

This sequence belongs to the RNA polymerase alpha chain family. As to quaternary structure, homodimer. The RNAP catalytic core consists of 2 alpha, 1 beta, 1 beta' and 1 omega subunit. When a sigma factor is associated with the core the holoenzyme is formed, which can initiate transcription.

The enzyme catalyses RNA(n) + a ribonucleoside 5'-triphosphate = RNA(n+1) + diphosphate. Functionally, DNA-dependent RNA polymerase catalyzes the transcription of DNA into RNA using the four ribonucleoside triphosphates as substrates. This is DNA-directed RNA polymerase subunit alpha from Halalkalibacterium halodurans (strain ATCC BAA-125 / DSM 18197 / FERM 7344 / JCM 9153 / C-125) (Bacillus halodurans).